We begin with the raw amino-acid sequence, 249 residues long: Vacuolar iron transporter homolog 3 (249 aa).

Positions 1–32 (MAMQMNSVVHVSTSPSPSPATSPPPEGKQEHG) are disordered. The Cytoplasmic portion of the chain corresponds to 1 to 74 (MAMQMNSVVH…SGRAQWLRAA (74 aa)). The segment covering 16–26 (SPSPATSPPPE) has biased composition (pro residues). The chain crosses the membrane as a helical span at residues 75–95 (VLGANDGLVSVASLMIGVGAV). Residues 96-102 (SESGRAM) are Vacuolar-facing. The helical transmembrane segment at 103–123 (LVSGVAGLVAGACSMAIGEFV) threads the bilayer. Residues 124–166 (SVYAQYDIEVAAARRRRRQRRRRCDGDGEEEGSGRLPSPFKAA) are Cytoplasmic-facing. A helical membrane pass occupies residues 167–187 (AASALAFTVGALLPLLAGGFV). Over 188–193 (RPWAPR) the chain is Vacuolar. The chain crosses the membrane as a helical span at residues 194-214 (VAAVCAATSAALAGFGALGAA). Over 215 to 226 (LGGASPARSAAR) the chain is Cytoplasmic. The helical transmembrane segment at 227-247 (VLLGGWAAMAACYGVLRLFAN) threads the bilayer. The Vacuolar segment spans residues 248–249 (LY).

It belongs to the CCC1 family.

The protein localises to the vacuole membrane. The enzyme catalyses Fe(2+)(in) = Fe(2+)(out). Functionally, probable vacuolar iron transporter that may be involved in the regulation of iron distribution throughout the plant. In Oryza sativa subsp. japonica (Rice), this protein is Vacuolar iron transporter homolog 3.